A 220-amino-acid polypeptide reads, in one-letter code: MGMDQQPNPPDVDAFLDSTLVGDDPALAAALAASDAAELPRIAVSAQQGKFLCLLAGAIQARRVLEIGTLGGFSTIWLARGAGPQGRVVTLEYQPKHAEVARVNLQRAGVADRVEVVVGPALDTLPTLAGGPFDLVFIDADKENNVAYIQWAIRLARRGAVIVVDNVIRGGGILAESDDADAVAARRTLQMMGEHPGLDATAIQTVGRKGWDGFALALVR.

S-adenosyl-L-methionine is bound by residues valine 44, glutamate 66, 68 to 69 (GT), serine 74, glutamate 92, and alanine 121. Aspartate 139 lines the a divalent metal cation pocket. Position 141 (aspartate 141) interacts with S-adenosyl-L-methionine. A divalent metal cation is bound by residues aspartate 165 and asparagine 166.

The protein belongs to the class I-like SAM-binding methyltransferase superfamily. Cation-dependent O-methyltransferase family. As to quaternary structure, homodimer. It depends on a divalent metal cation as a cofactor.

The catalysed reaction is a catechol + S-adenosyl-L-methionine = a guaiacol + S-adenosyl-L-homocysteine + H(+). Its activity is regulated as follows. Inhibited by EDTA. Functionally, catechol O-methyltransferase that can use various catechol-like compounds such as gallic acid (GA), 3,4-dihydroxy-5-methoxy-benzoic acid (5OMeBA), protocatechuic acid (PCA), 3,4-dihydroxy-benzaldehyde (DHA), dopamine, caffeic acid (CA), luteolin, quercetin, and 5-hydroxyuridine. This is Catechol O-methyltransferase from Mycobacterium tuberculosis (strain ATCC 25618 / H37Rv).